We begin with the raw amino-acid sequence, 246 residues long: UPF0309 protein TTE0306 (246 aa).

An SIS domain is found at 31-212; it reads ITESLISEDS…EAEIITNMLE (182 aa).

The protein belongs to the UPF0309 family.

In Caldanaerobacter subterraneus subsp. tengcongensis (strain DSM 15242 / JCM 11007 / NBRC 100824 / MB4) (Thermoanaerobacter tengcongensis), this protein is UPF0309 protein TTE0306.